The chain runs to 903 residues: Dual 3',5'-cyclic-AMP and -GMP phosphodiesterase 11A (903 aa).

GAF domains follow at residues 175 to 324 and 356 to 512; these read DLTS…GIAI and DLEK…GLGI. Position 378 (Ser-378) interacts with 3',5'-cyclic GMP. Residues 542 to 866 enclose the PDEase domain; the sequence is SKTEVDKFKA…VKWEELDKKR (325 aa). Catalysis depends on His-618, which acts as the Proton donor. 4 residues coordinate a divalent metal cation: His-622, His-658, Asp-659, and Asp-770. Positions 863 to 903 are disordered; sequence DKKRQHDHGASVPASPCSAAEGSETGGVPCCSNNTPPTHVS. The segment covering 893 to 903 has biased composition (polar residues); sequence CSNNTPPTHVS.

The protein belongs to the cyclic nucleotide phosphodiesterase family. The cofactor is a divalent metal cation.

The protein localises to the cytoplasm. Its subcellular location is the cytosol. It catalyses the reaction 3',5'-cyclic GMP + H2O = GMP + H(+). It carries out the reaction 3',5'-cyclic AMP + H2O = AMP + H(+). In terms of biological role, plays a role in signal transduction by regulating the intracellular concentration of cyclic nucleotides cAMP and cGMP. Catalyzes the hydrolysis of both cAMP and cGMP to 5'-AMP and 5'-GMP, respectively. In Takifugu rubripes (Japanese pufferfish), this protein is Dual 3',5'-cyclic-AMP and -GMP phosphodiesterase 11A (pde11a).